The sequence spans 189 residues: MAPAWSLLLALLLLSCNAICSLGCHLPHTHSLANRRVLTLLRQLRRVSPSSCLQDRNDFAFPQEALGGSQLQKAQAISVLHEVTQHTFQFFSVEGSAVVWDESLLDKLRDALDQQLTDLQFCLRQEEGLRGAPLLKEDSSLAVRKYFHRLTLYLQEKRHSPCAWEVVRAEVMRAFSSSTNLQERFRRKD.

An N-terminal signal peptide occupies residues 1–23; sequence MAPAWSLLLALLLLSCNAICSLG. Intrachain disulfides connect Cys-24–Cys-122 and Cys-52–Cys-162.

It belongs to the alpha/beta interferon family.

The protein resides in the secreted. Functionally, produced by macrophages, IFN-alpha have antiviral activities. Interferon stimulates the production of two enzymes: a protein kinase and an oligoadenylate synthetase. This chain is Interferon alpha-G (IFNAG), found in Bos taurus (Bovine).